A 280-amino-acid chain; its full sequence is Bis(5'-nucleosyl)-tetraphosphatase, symmetrical (280 aa).

Belongs to the Ap4A hydrolase family.

It carries out the reaction P(1),P(4)-bis(5'-adenosyl) tetraphosphate + H2O = 2 ADP + 2 H(+). Functionally, hydrolyzes diadenosine 5',5'''-P1,P4-tetraphosphate to yield ADP. In Paracidovorax citrulli (strain AAC00-1) (Acidovorax citrulli), this protein is Bis(5'-nucleosyl)-tetraphosphatase, symmetrical.